A 131-amino-acid chain; its full sequence is Small ribosomal subunit protein uS11 (131 aa).

It belongs to the universal ribosomal protein uS11 family. In terms of assembly, part of the 30S ribosomal subunit. Interacts with proteins S7 and S18. Binds to IF-3.

Functionally, located on the platform of the 30S subunit, it bridges several disparate RNA helices of the 16S rRNA. Forms part of the Shine-Dalgarno cleft in the 70S ribosome. This Helicobacter pylori (strain G27) protein is Small ribosomal subunit protein uS11.